A 428-amino-acid polypeptide reads, in one-letter code: Putative FBD-associated F-box protein At5g56390 (428 aa).

The F-box domain occupies 2 to 50 (DKISQLHDELLLGILSLLPNAKDVVATMVLSKRWRYLWMMVPSLVYDDS). An FBD domain is found at 344–394 (CWNETSLVPEYLLPSLETFEWVDYEGTKTEKQVVAFILRIASCLKQATIVS).

The polypeptide is Putative FBD-associated F-box protein At5g56390 (Arabidopsis thaliana (Mouse-ear cress)).